The primary structure comprises 585 residues: A-type ATP synthase subunit A (585 aa).

An ATP-binding site is contributed by 231 to 238; the sequence is GPFGSGKT.

This sequence belongs to the ATPase alpha/beta chains family. As to quaternary structure, has multiple subunits with at least A(3), B(3), C, D, E, F, H, I and proteolipid K(x).

It is found in the cell membrane. It carries out the reaction ATP + H2O + 4 H(+)(in) = ADP + phosphate + 5 H(+)(out). Functionally, produces ATP from ADP in the presence of a proton gradient across the membrane. The archaeal alpha chain is a catalytic subunit. In terms of biological role, component of the A-type ATP synthase that produces ATP from ADP in the presence of a proton gradient across the membrane. The A chain is the catalytic subunit. The polypeptide is A-type ATP synthase subunit A (Thermococcus kodakarensis (strain ATCC BAA-918 / JCM 12380 / KOD1) (Pyrococcus kodakaraensis (strain KOD1))).